Reading from the N-terminus, the 291-residue chain is MGGDNTLNDFRHIPRKRFGQHWLKDQGVLDQIVKAAELNPEDCVLEVGPGKGALTEKLIESQARFIQAIELDRDLVVGLKKRFSHQNKFSLREGDILSAPLDAENGLTINKVVANIPYNITGPLLKRLIGELRKAPDNCFETLVLLMQKEVAQRLLARPGTSNFSALSVRIQLLAKCQDVCDVPSKCFQPAPKVDSKVVMIKPFASIDPDFYEVGNLLEKLLKHAFAGRRKKLRNTIGSFVTSNDQIKEFFAYRGISLDQRPQEISPSNWFGLAKALKETCVIENGTFQSK.

S-adenosyl-L-methionine contacts are provided by H21, L23, G48, E70, D95, and N115.

Belongs to the class I-like SAM-binding methyltransferase superfamily. rRNA adenine N(6)-methyltransferase family. RsmA subfamily.

The protein resides in the cytoplasm. The enzyme catalyses adenosine(1518)/adenosine(1519) in 16S rRNA + 4 S-adenosyl-L-methionine = N(6)-dimethyladenosine(1518)/N(6)-dimethyladenosine(1519) in 16S rRNA + 4 S-adenosyl-L-homocysteine + 4 H(+). Functionally, specifically dimethylates two adjacent adenosines (A1518 and A1519) in the loop of a conserved hairpin near the 3'-end of 16S rRNA in the 30S particle. May play a critical role in biogenesis of 30S subunits. The protein is Ribosomal RNA small subunit methyltransferase A of Prochlorococcus marinus (strain NATL2A).